We begin with the raw amino-acid sequence, 278 residues long: Phosphoenolpyruvate carboxylase kinase 2 (278 aa).

The 259-residue stretch at 11–269 (YQLCDEIGRG…AEDALRHSWM (259 aa)) folds into the Protein kinase domain. Residues 17–25 (IGRGRFGTI) and Lys-40 contribute to the ATP site. The Proton acceptor role is filled by Asp-137.

This sequence belongs to the protein kinase superfamily. Ser/Thr protein kinase family. In terms of tissue distribution, expressed in flowers and roots, and at lower levels in cauline leaves. Barely detectable in rosette leaves and stems.

It carries out the reaction L-seryl-[protein] + ATP = O-phospho-L-seryl-[protein] + ADP + H(+). The catalysed reaction is L-threonyl-[protein] + ATP = O-phospho-L-threonyl-[protein] + ADP + H(+). Calcium-independent kinase involved in light-dependent phosphoenolpyruvate carboxylase phosphorylation. The protein is Phosphoenolpyruvate carboxylase kinase 2 (PPCK2) of Arabidopsis thaliana (Mouse-ear cress).